The chain runs to 382 residues: Glycerate dehydrogenase (382 aa).

Residues 175–176, 271–273, and D297 contribute to the NAD(+) site; these read RI and CSR. R273 is a catalytic residue. E302 is a catalytic residue. Residue H320 is the Proton donor of the active site. Position 320 to 323 (320 to 323) interacts with NAD(+); that stretch reads HIAS.

It belongs to the D-isomer specific 2-hydroxyacid dehydrogenase family.

It is found in the peroxisome. It carries out the reaction (R)-glycerate + NAD(+) = 3-hydroxypyruvate + NADH + H(+). It participates in photosynthesis; photorespiration; 3-phospho-D-glycerate from glycine: step 3/4. This chain is Glycerate dehydrogenase (HPR-A), found in Cucumis sativus (Cucumber).